We begin with the raw amino-acid sequence, 341 residues long: Tryptophan--tRNA ligase (341 aa).

ATP is bound by residues 11-13 (RPT) and 19-20 (GH). The short motif at 12-20 (PTGKLHIGH) is the 'HIGH' region element. Residue aspartate 140 coordinates L-tryptophan. Residues 152 to 154 (GED), leucine 193, and 201 to 205 (KMSKS) contribute to the ATP site. A 'KMSKS' region motif is present at residues 201–205 (KMSKS).

The protein belongs to the class-I aminoacyl-tRNA synthetase family. As to quaternary structure, homodimer.

It is found in the cytoplasm. It carries out the reaction tRNA(Trp) + L-tryptophan + ATP = L-tryptophyl-tRNA(Trp) + AMP + diphosphate + H(+). Functionally, catalyzes the attachment of tryptophan to tRNA(Trp). This chain is Tryptophan--tRNA ligase, found in Clostridium longisporum.